Here is a 471-residue protein sequence, read N- to C-terminus: Putative multidrug resistance protein MdtD (471 aa).

The Periplasmic segment spans residues 1–11; that stretch reads MTDLPDSTRWQ. A helical transmembrane segment spans residues 12–32; that stretch reads LWIVAFGFFMQSLDTTIVNTA. Residues 33-48 are Cytoplasmic-facing; that stretch reads LPSMAQSLGESPLHMH. A helical membrane pass occupies residues 49–69; the sequence is MVIVSYVLTVAVMLPASGWLA. Residues 70-76 are Periplasmic-facing; that stretch reads DKVGVRN. The chain crosses the membrane as a helical span at residues 77–97; that stretch reads IFFTAIVLFTLGSLFCALSGT. The Cytoplasmic segment spans residues 98 to 101; it reads LNEL. A helical transmembrane segment spans residues 102 to 124; it reads LLARALQGVGGAMMVPVGRLTVM. The Periplasmic segment spans residues 125–137; the sequence is KIVPREQYMAAMT. The helical transmembrane segment at 138–158 threads the bilayer; it reads FVTLPGQVGPLLGPALGGLLV. Topologically, residues 159-164 are cytoplasmic; that stretch reads EYASWH. Residues 165–185 traverse the membrane as a helical segment; the sequence is WIFLINIPVGIIGAIATLMLM. Residues 186-196 are Periplasmic-facing; sequence PNYTMQTRRFD. Residues 197 to 217 form a helical membrane-spanning segment; the sequence is LSGFLLLAVGMAVLTLALDGS. Residues 218-224 are Cytoplasmic-facing; the sequence is KGTGLSP. A helical transmembrane segment spans residues 225–245; that stretch reads LAIAGLVAVGVVALVLYLLHA. Over 246 to 262 the chain is Periplasmic; sequence RNNNRALFSLKLFRTRT. The helical transmembrane segment at 263 to 283 threads the bilayer; that stretch reads FSLGLAGSFAGRIGSGMLPFM. Residues 284 to 285 lie on the Cytoplasmic side of the membrane; sequence TP. Residues 286 to 306 form a helical membrane-spanning segment; that stretch reads VFLQIGLGFSPFHAGLMMIPM. The Periplasmic segment spans residues 307–341; that stretch reads VLGSMGMKRIVVQVVNRFGYRRVLVATTLGLSLVT. Residues 342–362 traverse the membrane as a helical segment; sequence LLFMTTALLGWYYVLPFVLFL. Residues 363–395 lie on the Cytoplasmic side of the membrane; that stretch reads QGMVNSTRFSSMNTLTLKDLPDNLASSGNSLLS. Residues 396–416 form a helical membrane-spanning segment; sequence MIMQLSMSIGVTIAGLLLGLF. Residues 417-430 are Periplasmic-facing; the sequence is GSQHVSVDSGTTQT. The helical transmembrane segment at 431-451 threads the bilayer; it reads VFMYTWLSMAFIIALPAFIFA. Topologically, residues 452 to 471 are cytoplasmic; it reads RVPNDTHQNVAISRRKRSAQ.

Belongs to the major facilitator superfamily. TCR/Tet family.

It is found in the cell inner membrane. In Escherichia coli (strain SMS-3-5 / SECEC), this protein is Putative multidrug resistance protein MdtD.